An 80-amino-acid polypeptide reads, in one-letter code: MKKDIHPDYRPVVFMDTTTGYQFLSGSTKHSNETVEFEGETYPLIRVEISSDSHPFYTGRQKFTQADGRVDRFNKKYGLK.

This sequence belongs to the bacterial ribosomal protein bL31 family. Type B subfamily. Part of the 50S ribosomal subunit.

The chain is Large ribosomal subunit protein bL31B from Streptococcus thermophilus (strain CNRZ 1066).